A 651-amino-acid chain; its full sequence is MSRGPAGAWVALGPLLWTCGLALEGGMLYPRESPSRERKDLDGLWSFRADFSDGRRQGFEQQWYRAPLRESGPTLDMPVPSSFNDVGQDRQLRSFVGWVWYEREATLPRRWSQDPGTRVVLRIGSAHYYAIVWVNGVHVAEHEGGHLPFEADISKLVQSGPLSSCRITLAINNTLTPHTLPPGTIVYKTDASKYPKGYFVQNTYFDFFNYAGLHRPVLLYTTPTTYIDDITVTTGVDQDTGLVDYQIFVQGSEHFQLEVYLLDEEGKVVAQGTGSQGRLQVPNVHLWWPYLMHEHPAYLYSLEVRLTAQMAAGPVSDFYTLPVGIRTVAVTERQFLINGKPFYFHGVNKHEDADIRGKGFDWPLLVKDFNLLRWLGANAFRTSHYPYAEEVMQLCDRYGIVVIDESPGVGIMLVQSYSNVSLQHHLEVMGELVRRDKNHPSVVMWSVANEPTSFLKPAAYYFKTLIAHTKALDPSRPVTFVTNSNYEADLGAPYVDVICVNSYYSWYHDYGHMEVIQLQLATEFENWYRTYQKPIIQSEYGAETIAGFHQDPPLMFSEEYQKGLLEQYHLVLDQKRKEYVVGELIWNFADFMTDQSPQRAVGNRKGIFTRQRQPKAAAFLLRERYWKLANETGHHRSAAKSQCLENSPFAL.

Residues 1 to 22 (MSRGPAGAWVALGPLLWTCGLA) form the signal peptide. N-linked (GlcNAc...) asparagine glycosylation is found at Asn172 and Asn419. The active-site Proton donor is Glu450. Residue Asn630 is glycosylated (N-linked (GlcNAc...) asparagine).

It belongs to the glycosyl hydrolase 2 family. As to quaternary structure, homotetramer.

Its subcellular location is the lysosome. It catalyses the reaction a beta-D-glucuronoside + H2O = D-glucuronate + an alcohol. Inhibited by L-aspartic acid. Its function is as follows. Plays an important role in the degradation of dermatan and keratan sulfates. This chain is Beta-glucuronidase (GUSB), found in Canis lupus familiaris (Dog).